The primary structure comprises 506 residues: Zinc finger and SCAN domain containing protein 4F (506 aa).

Residues 1 to 24 (MASQQAPAKDLQTNNLEFTPTDSS) form a disordered region. Residues 37–119 (SAQLNFSPSN…RFMESLTDEC (83 aa)) enclose the SCAN box domain. C2H2-type zinc fingers lie at residues 395 to 417 (YKCE…QRTH), 424 to 446 (LLCV…EIIH), 452 to 474 (FKCS…EMIH), and 480 to 503 (YVCS…RNYH).

As to expression, up-regulated in blastocyst outgrowths and is detectable in a mosaic fashion in ES cultures.

Its subcellular location is the nucleus. It localises to the chromosome. The protein localises to the telomere. Functionally, transcription factor required to regulate early development. Binds telomeres and plays a key role in genomic stability by regulating telomere elongation. Acts as an activator of spontaneous telomere sister chromatid exchange (T-SCE) and telomere elongation. This chain is Zinc finger and SCAN domain containing protein 4F (Zscan4f), found in Mus musculus (Mouse).